The primary structure comprises 240 residues: MSLLIVANWKMYGDFLTFSSFTKELSANLVNVKADVEVVLCPPFIACSKIVDCAPNIKLGAQNCFYESEGKYTGEVSAKMLYSCGCSYVIVGHYERRSIFYESDYCVQLKAKSAIDAGLIPIICIGETLLDRENGMLKNALLDQCYNSFPKHGEFVIAYEPVWAIGSNTIPSIDMITESLDIIRSYDSKSNIIYGGAVNQSNIKDVIAINQLSGVLVGSASLKVSSFCDIIYGAVNVRQN.

8-10 (NWK) serves as a coordination point for substrate. Histidine 93 serves as the catalytic Electrophile. Catalysis depends on glutamate 160, which acts as the Proton acceptor. Position 166 (glycine 166) interacts with substrate.

The protein belongs to the triosephosphate isomerase family. As to quaternary structure, homodimer.

It is found in the cytoplasm. It carries out the reaction D-glyceraldehyde 3-phosphate = dihydroxyacetone phosphate. The protein operates within carbohydrate biosynthesis; gluconeogenesis. It participates in carbohydrate degradation; glycolysis; D-glyceraldehyde 3-phosphate from glycerone phosphate: step 1/1. Functionally, involved in the gluconeogenesis. Catalyzes stereospecifically the conversion of dihydroxyacetone phosphate (DHAP) to D-glyceraldehyde-3-phosphate (G3P). The protein is Triosephosphate isomerase of Ehrlichia chaffeensis (strain ATCC CRL-10679 / Arkansas).